The following is an 83-amino-acid chain: Large ribosomal subunit protein eL43 (83 aa).

Zn(2+)-binding residues include Cys-38, Cys-41, Cys-56, and Cys-59. The C4-type zinc finger occupies Cys-38–Cys-59.

It belongs to the eukaryotic ribosomal protein eL43 family. Putative zinc-binding subfamily. Part of the 50S ribosomal subunit. Zn(2+) serves as cofactor.

Its function is as follows. Binds to the 23S rRNA. The sequence is that of Large ribosomal subunit protein eL43 from Pyrococcus horikoshii (strain ATCC 700860 / DSM 12428 / JCM 9974 / NBRC 100139 / OT-3).